Here is a 212-residue protein sequence, read N- to C-terminus: Glutathione S-transferase (212 aa).

Positions 1 to 82 (MGMKLHGPAM…YIAHTYADKG (82 aa)) constitute a GST N-terminal domain. Residues serine 11, 12-13 (PA), 40-41 (HK), 53-54 (QV), and 66-67 (ES) contribute to the glutathione site. The 124-residue stretch at 89-212 (DPKKMAIMSV…AWSKAIEYKQ (124 aa)) folds into the GST C-terminal domain.

Belongs to the GST superfamily. Phi family.

The catalysed reaction is RX + glutathione = an S-substituted glutathione + a halide anion + H(+). Conjugation of reduced glutathione to a wide number of exogenous and endogenous hydrophobic electrophiles. The sequence is that of Glutathione S-transferase from Hyoscyamus muticus (Egyptian henbane).